The primary structure comprises 771 residues: Kinase suppressor of Ras A (771 aa).

Residues 152 to 169 (SRTSSGSTDEPSGQSTPA) show a composition bias toward polar residues. Residues 152-172 (SRTSSGSTDEPSGQSTPAIVT) are disordered. The Phorbol-ester/DAG-type zinc-finger motif lies at 215–269 (PHKWHRSTKFRFSGDAVCHFCQRPLGFGFLNAWEKCRSCKWKVHTQCKGRVGDSC). 2 disordered regions span residues 290–339 (GMWK…ISGN) and 414–433 (DSTG…EAVD). The segment covering 318–331 (SSSSTNSSAPSTPA) has biased composition (low complexity). In terms of domain architecture, Protein kinase spans 477-748 (DKQAPIIGRG…TDINLKLTAL (272 aa)). ATP is bound by residues 483 to 491 (IGRGRFGKV) and K503. The active-site Proton acceptor is the D600.

It belongs to the protein kinase superfamily. TKL Ser/Thr protein kinase family. In terms of assembly, interacts with mek-2. The cofactor is Mg(2+).

The enzyme catalyses L-seryl-[protein] + ATP = O-phospho-L-seryl-[protein] + ADP + H(+). It catalyses the reaction L-threonyl-[protein] + ATP = O-phospho-L-threonyl-[protein] + ADP + H(+). Its function is as follows. Serine/threonine-protein kinase which positively regulates Ras-mediated signaling probably acting at the level of let-60/ras or/and lin-45/raf. Involved in sex myoblast migration. Plays a role in responses to M.nematophilum-mediated bacterial infection by promoting tail swelling and preventing constipation. Functions redundantly with ksr-2 in the Ras-mediated regulation of larval survival, the development of excretory canal and in mpk-1 phosphorylation in somatic cells. In addition, involved in determining vulval precursor cell fate during vulval induction independently of its kinase activity. Plays a role in egg-laying. This Caenorhabditis elegans protein is Kinase suppressor of Ras A.